A 191-amino-acid polypeptide reads, in one-letter code: Prostaglandin-H2 D-isomerase (191 aa).

Positions 1–24 (MAALHTLWMGLVLLGVLGVLQTRA) are cleaved as a signal peptide. Q25 carries the post-translational modification Pyrrolidone carboxylic acid. N-linked (GlcNAc...) asparagine glycosylation occurs at N51. C65 serves as the catalytic Nucleophile. The N-linked (GlcNAc...) asparagine glycan is linked to N78. A disulfide bridge connects residues C89 and C186.

It belongs to the calycin superfamily. Lipocalin family. In terms of assembly, monomer. N- and O-glycosylated. Both N-glycosylation recognition sites are almost quantitatively occupied by N-glycans of the biantennary complex type, with a considerable proportion of structures bearing a bisecting GlcNAc. N-glycan at Asn-78: dHex1Hex5HexNAc4. Agalacto structure as well as sialylated and nonsialylated oligosaccharides bearing alpha2-3- and/or alpha2-6-linked NeuNAc are present.

Its subcellular location is the rough endoplasmic reticulum. The protein resides in the nucleus membrane. It localises to the golgi apparatus. The protein localises to the cytoplasm. It is found in the perinuclear region. Its subcellular location is the secreted. The enzyme catalyses prostaglandin H2 = prostaglandin D2. Functionally, catalyzes the conversion of PGH2 to PGD2, a prostaglandin involved in smooth muscle contraction/relaxation and a potent inhibitor of platelet aggregation. Involved in a variety of CNS functions, such as sedation, NREM sleep and PGE2-induced allodynia, and may have an anti-apoptotic role in oligodendrocytes. Binds small non-substrate lipophilic molecules, including biliverdin, bilirubin, retinal, retinoic acid and thyroid hormone, and may act as a scavenger for harmful hydrophobic molecules and as a secretory retinoid and thyroid hormone transporter. Possibly involved in development and maintenance of the blood-brain, blood-retina, blood-aqueous humor and blood-testis barrier. It is likely to play important roles in both maturation and maintenance of the central nervous system and male reproductive system. Involved in PLA2G3-dependent maturation of mast cells. PLA2G3 is secreted by immature mast cells and acts on nearby fibroblasts upstream to PTDGS to synthesize PGD2, which in turn promotes mast cell maturation and degranulation via PTGDR. This is Prostaglandin-H2 D-isomerase (PTGDS) from Felis catus (Cat).